The primary structure comprises 370 residues: tRNA-specific 2-thiouridylase MnmA 1 (370 aa).

ATP contacts are provided by residues 9 to 16 and Met35; that span reads GMSGGVDS. The tract at residues 95–97 is interaction with target base in tRNA; the sequence is NPD. The Nucleophile role is filled by Cys100. A disulfide bond links Cys100 and Cys196. Gly124 provides a ligand contact to ATP. The interval 146-148 is interaction with tRNA; it reads KDQ. The active-site Cysteine persulfide intermediate is Cys196. The segment at 306–307 is interaction with tRNA; that stretch reads RY.

This sequence belongs to the MnmA/TRMU family.

It localises to the cytoplasm. The enzyme catalyses S-sulfanyl-L-cysteinyl-[protein] + uridine(34) in tRNA + AH2 + ATP = 2-thiouridine(34) in tRNA + L-cysteinyl-[protein] + A + AMP + diphosphate + H(+). In terms of biological role, catalyzes the 2-thiolation of uridine at the wobble position (U34) of tRNA, leading to the formation of s(2)U34. The polypeptide is tRNA-specific 2-thiouridylase MnmA 1 (Geobacillus kaustophilus (strain HTA426)).